A 1140-amino-acid polypeptide reads, in one-letter code: Eukaryotic translation initiation factor 3 subunit A (1140 aa).

Positions L319–T502 constitute a PCI domain. 3 stretches are compositionally biased toward basic and acidic residues: residues Q589 to E624, A830 to D900, and E921 to S984. 2 disordered regions span residues Q589–I632 and A830–R1140. A compositionally biased stretch (low complexity) spans A987–A998. 3 stretches are compositionally biased toward basic and acidic residues: residues S999–R1050, D1058–Q1086, and P1109–D1130.

The protein belongs to the eIF-3 subunit A family. In terms of assembly, component of the eukaryotic translation initiation factor 3 (eIF-3) complex. The eIF-3 complex interacts with pix.

Its subcellular location is the cytoplasm. In terms of biological role, RNA-binding component of the eukaryotic translation initiation factor 3 (eIF-3) complex, which is involved in protein synthesis of a specialized repertoire of mRNAs and, together with other initiation factors, stimulates binding of mRNA and methionyl-tRNAi to the 40S ribosome. The eIF-3 complex specifically targets and initiates translation of a subset of mRNAs involved in cell proliferation. In Drosophila ananassae (Fruit fly), this protein is Eukaryotic translation initiation factor 3 subunit A.